The following is a 240-amino-acid chain: Ribonuclease P protein component (240 aa).

The disordered stretch occupies residues 1–140; that stretch reads MDEKDLATQQ…KKAGGKGLVS (140 aa). Pro residues predominate over residues 40-51; it reads APPPHRVIPPHP. The tract at residues 47-123 is insert; sequence IPPHPGLRQD…PGPDRDGGSK (77 aa). A compositionally biased stretch (low complexity) spans 122-132; that stretch reads SKASRASSPKK.

It belongs to the RnpA family. As to quaternary structure, consists of a catalytic RNA component (M1 or rnpB) and a protein subunit.

The catalysed reaction is Endonucleolytic cleavage of RNA, removing 5'-extranucleotides from tRNA precursor.. In terms of biological role, RNaseP catalyzes the removal of the 5'-leader sequence from pre-tRNA to produce the mature 5'-terminus. It can also cleave other RNA substrates such as 4.5S RNA. The protein component plays an auxiliary but essential role in vivo by binding to the 5'-leader sequence and broadening the substrate specificity of the ribozyme. The protein is Ribonuclease P protein component of Thermus filiformis.